Consider the following 271-residue polypeptide: Probable iron transport system membrane protein HI_0359 (271 aa).

The next 8 helical transmembrane spans lie at 17–37 (ALLT…YLVL), 55–75 (IVLA…SGIF), 93–113 (TAMG…FTKI), 131–151 (SHQE…LIVF), 168–188 (VAGL…ALTI), 194–214 (VVGV…ALTL), 221–241 (MLWV…ILSY), and 245–265 (ASTG…ALAY).

Belongs to the ABC-3 integral membrane protein family.

It is found in the cell inner membrane. Its function is as follows. Part of an ATP-driven transport system HI_0359/HI_0360/HI_0361/HI_0362 for iron. The chain is Probable iron transport system membrane protein HI_0359 from Haemophilus influenzae (strain ATCC 51907 / DSM 11121 / KW20 / Rd).